The sequence spans 321 residues: Mas-related G-protein coupled receptor member H (321 aa).

Residues 1 to 35 (MEPLATTLCPQECTQTTRNETPNETTWSSEHVTKY) are Extracellular-facing. The N-linked (GlcNAc...) asparagine glycan is linked to asparagine 23. A helical transmembrane segment spans residues 36–56 (TYISISLVICSLGLVGNGLLI). Residues 57 to 71 (WFLIFCIKRKPFTIY) are Cytoplasmic-facing. A helical membrane pass occupies residues 72-92 (ILHLAFADFMVLLCSSIIQLV). At 93-102 (NTFHIYDSTL) the chain is on the extracellular side. Residues 103-126 (VSYAVLFMIFGYNTGLHLLTAISV) form a helical membrane-spanning segment. Residues 127 to 147 (ERCLSVLYPIWYHCRRPKHQS) lie on the Cytoplasmic side of the membrane. A helical membrane pass occupies residues 148–168 (TVACTLLWALSVLVSGLENFF). Residues 169–188 (CILEVKPQFPECRYVYIFSC) are Extracellular-facing. Residues 189–209 (TLTFLVFVPLMVFSNLILFIQ) traverse the membrane as a helical segment. Residues 210–225 (VCCNLKPRQPAKLYVI) are Cytoplasmic-facing. A helical transmembrane segment spans residues 226-246 (IMATVILFLVFAMPMKVLLII). Position 247 (glycine 247) is a topological domain, extracellular. Residues 248–271 (YYSNSTDASVWKSLPYLNMLSTIN) form a helical membrane-spanning segment. At 272–320 (CSINPIVYFVVGSLRRKRSRKSLKEALQKVFEEKPVVASRENEVQFSLP) the chain is on the cytoplasmic side.

Belongs to the G-protein coupled receptor 1 family. Mas subfamily.

The protein localises to the cell membrane. Its function is as follows. Orphan receptor. May regulate nociceptor function and/or development, including the sensation or modulation of pain. This chain is Mas-related G-protein coupled receptor member H (Mrgprh), found in Rattus norvegicus (Rat).